The following is a 227-amino-acid chain: Orotidine 5'-phosphate decarboxylase (227 aa).

Substrate is bound by residues aspartate 8, lysine 30, 59-68 (DLKLYDIPYT), threonine 118, arginine 178, glutamine 187, glycine 207, and arginine 208. Lysine 61 (proton donor) is an active-site residue.

Belongs to the OMP decarboxylase family. Type 1 subfamily. As to quaternary structure, homodimer.

It catalyses the reaction orotidine 5'-phosphate + H(+) = UMP + CO2. The protein operates within pyrimidine metabolism; UMP biosynthesis via de novo pathway; UMP from orotate: step 2/2. Catalyzes the decarboxylation of orotidine 5'-monophosphate (OMP) to uridine 5'-monophosphate (UMP). The sequence is that of Orotidine 5'-phosphate decarboxylase from Helicobacter pylori (strain P12).